A 297-amino-acid chain; its full sequence is IMPACT family member C14C8.09c (297 aa).

The stretch at 225–255 forms a coiled coil; the sequence is LRSELQEKNQKDKKKEVNKLEEKMTNAKEPN. Composition is skewed to basic and acidic residues over residues 228–250 and 280–297; these read ELQE…KMTN and SVDH…EKEE. Residues 228 to 297 form a disordered region; it reads ELQEKNQKDK…KIIKDVEKEE (70 aa).

Belongs to the IMPACT family.

This chain is IMPACT family member C14C8.09c, found in Schizosaccharomyces pombe (strain 972 / ATCC 24843) (Fission yeast).